A 215-amino-acid polypeptide reads, in one-letter code: MFTGIVEETGTIQAIKKTGLSMALTIAASKVTSDVRLGDSIAVNGICLTVTGFSDNQFTVDVMPETVKATSLNGLSKGSKVNLERAMSANGRFGGHFVSGHVDGTAEITRIEKKSNAVYYDLKLSPELTKTLVLKGSITVDGVSSTIFGLSDESVTVSVIPHTISETIFRTKAVGSIVNIECDMIGKYLYRFLHKTEQTKSNQTITEAFFSENGF.

2 Lumazine-binding repeats span residues 1 to 96 (MFTG…FGGH) and 97 to 193 (FVSG…YRFL). Residues 4–6 (GIV), 47–49 (CLT), 61–66 (DVMPET), 100–102 (GHV), lysine 135, 144–146 (SST), and 158–163 (SVIPHT) each bind 2,4-dihydroxypteridine.

In terms of assembly, homotrimer.

The catalysed reaction is 2 6,7-dimethyl-8-(1-D-ribityl)lumazine + H(+) = 5-amino-6-(D-ribitylamino)uracil + riboflavin. It participates in cofactor biosynthesis; riboflavin biosynthesis; riboflavin from 2-hydroxy-3-oxobutyl phosphate and 5-amino-6-(D-ribitylamino)uracil: step 2/2. In terms of biological role, catalyzes the dismutation of two molecules of 6,7-dimethyl-8-ribityllumazine, resulting in the formation of riboflavin and 5-amino-6-(D-ribitylamino)uracil. The sequence is that of Riboflavin synthase (ribE) from Bacillus amyloliquefaciens (Bacillus velezensis).